Here is a 164-residue protein sequence, read N- to C-terminus: ATP synthase subunit b (164 aa).

A helical membrane pass occupies residues 8–28; the sequence is FGIIFWQTITLLFVLFILGKF.

It belongs to the ATPase B chain family. As to quaternary structure, F-type ATPases have 2 components, F(1) - the catalytic core - and F(0) - the membrane proton channel. F(1) has five subunits: alpha(3), beta(3), gamma(1), delta(1), epsilon(1). F(0) has three main subunits: a(1), b(2) and c(10-14). The alpha and beta chains form an alternating ring which encloses part of the gamma chain. F(1) is attached to F(0) by a central stalk formed by the gamma and epsilon chains, while a peripheral stalk is formed by the delta and b chains.

It is found in the cell membrane. F(1)F(0) ATP synthase produces ATP from ADP in the presence of a proton or sodium gradient. F-type ATPases consist of two structural domains, F(1) containing the extramembraneous catalytic core and F(0) containing the membrane proton channel, linked together by a central stalk and a peripheral stalk. During catalysis, ATP synthesis in the catalytic domain of F(1) is coupled via a rotary mechanism of the central stalk subunits to proton translocation. Its function is as follows. Component of the F(0) channel, it forms part of the peripheral stalk, linking F(1) to F(0). The protein is ATP synthase subunit b of Amoebophilus asiaticus (strain 5a2).